Reading from the N-terminus, the 436-residue chain is Enolase (436 aa).

Gln167 provides a ligand contact to (2R)-2-phosphoglycerate. Glu209 functions as the Proton donor in the catalytic mechanism. Mg(2+) is bound by residues Asp246, Glu291, and Asp318. (2R)-2-phosphoglycerate contacts are provided by Lys343, Arg372, Ser373, and Lys394. The active-site Proton acceptor is Lys343.

Belongs to the enolase family. In terms of assembly, component of the RNA degradosome, a multiprotein complex involved in RNA processing and mRNA degradation. Requires Mg(2+) as cofactor.

The protein localises to the cytoplasm. It is found in the secreted. The protein resides in the cell surface. The catalysed reaction is (2R)-2-phosphoglycerate = phosphoenolpyruvate + H2O. Its pathway is carbohydrate degradation; glycolysis; pyruvate from D-glyceraldehyde 3-phosphate: step 4/5. Its function is as follows. Catalyzes the reversible conversion of 2-phosphoglycerate (2-PG) into phosphoenolpyruvate (PEP). It is essential for the degradation of carbohydrates via glycolysis. The sequence is that of Enolase from Haemophilus influenzae (strain PittEE).